Consider the following 103-residue polypeptide: Acyl carrier protein homolog (103 aa).

The region spanning 3-87 is the Carrier domain; sequence ELTSEIKKEI…ETLEKVVQTT (85 aa). S45 is subject to O-(pantetheine 4'-phosphoryl)serine.

In terms of processing, 4'-phosphopantetheine is transferred from CoA to a specific serine of the apo-ACP-like protein.

It localises to the cytoplasm. Acyl carrier protein. The protein is Acyl carrier protein homolog of Clostridium acetobutylicum (strain ATCC 824 / DSM 792 / JCM 1419 / IAM 19013 / LMG 5710 / NBRC 13948 / NRRL B-527 / VKM B-1787 / 2291 / W).